A 442-amino-acid chain; its full sequence is Endothelin receptor type B (442 aa).

The signal sequence occupies residues 1–26 (MQPPPSLCGRALVALVLACGLSRIWG). The Extracellular portion of the chain corresponds to 27-101 (EERGFPPDRA…GSIEIKETFK (75 aa)). An N-linked (GlcNAc...) asparagine glycan is attached at N59. The disordered stretch occupies residues 69–88 (AEVPKGDRTAGSPPRTISPP). A helical transmembrane segment spans residues 102-126 (YINTVVSCLVFVLGIIGNSTLLRII). At 127 to 137 (YKNKCMRNGPN) the chain is on the cytoplasmic side. A helical membrane pass occupies residues 138–163 (ILIASLALGDLLHIIIDIPITVYKLL). Topologically, residues 164–175 (AEDWPFGVEMCK) are extracellular. The cysteines at positions 174 and 255 are disulfide-linked. The helical transmembrane segment at 176 to 197 (LVPFIQKASVGITVLSLCALSI) threads the bilayer. At 198 to 218 (DRYRAVASWSRIKGIGVPKWT) the chain is on the cytoplasmic side. A helical transmembrane segment spans residues 219-243 (AVEIVLIWVVSVVLAVPEAVGFDMI). Residues 244–271 (TIDYKGRYLRICLLHPTQKTAFMQFYKT) lie on the Extracellular side of the membrane. The helical transmembrane segment at 272–296 (AKDWWLFSFYFCLPLAITAFFYTLM) threads the bilayer. Residues 297–324 (TCEMLRKKSGMQIALNDHLKQRREVAKT) are Cytoplasmic-facing. A Phosphoserine modification is found at S305. Residues 325-350 (VFCLVLVFALCWLPLHLSRILKLTIY) form a helical membrane-spanning segment. Residues 351–362 (DQNDPNRCELLS) lie on the Extracellular side of the membrane. The helical transmembrane segment at 363–389 (FLLVLDYIGINMASLNSCINPIALYLV) threads the bilayer. Residues 390-442 (SKRFKNCFKSCLCCWCQSFEEKQSLEEKQSCLKFKANDHGYDNFRSSNKYSSS) are Cytoplasmic-facing. 3 S-palmitoyl cysteine lipidation sites follow: C402, C403, and C405. Residue S419 is modified to Phosphoserine. Y439 bears the Phosphotyrosine mark. A phosphoserine mark is found at S440, S441, and S442.

This sequence belongs to the G-protein coupled receptor 1 family. Endothelin receptor subfamily. EDNRB sub-subfamily.

It is found in the cell membrane. Its function is as follows. Non-specific receptor for endothelin 1, 2, and 3. Mediates its action by association with G proteins that activate a phosphatidylinositol-calcium second messenger system. This is Endothelin receptor type B (EDNRB) from Canis lupus familiaris (Dog).